Here is a 246-residue protein sequence, read N- to C-terminus: Polyhedrin (246 aa).

It belongs to the polyhedrin family.

Its function is as follows. Major component of the virus occlusion bodies, which are large proteinaceous structures (polyhedra), that protect the virus from the outside environment for extended periods until they are ingested by insect larvae. This is Polyhedrin (PH) from Lepidoptera (butterflies and moths).